A 205-amino-acid chain; its full sequence is Golgi to ER traffic protein 1 (205 aa).

The Lumenal segment spans residues methionine 1–tyrosine 3. Residues tryptophan 4 to leucine 24 form a helical membrane-spanning segment. The Cytoplasmic segment spans residues alanine 25 to lysine 96. Positions glutamate 32 to lysine 96 form a coiled coil. Residues leucine 97–tyrosine 117 traverse the membrane as a helical segment. The Lumenal segment spans residues alanine 118–alanine 156. The helical transmembrane segment at valine 157–isoleucine 173 threads the bilayer. Over glutamate 174–asparagine 205 the chain is Cytoplasmic.

This sequence belongs to the WRB/GET1 family. In terms of assembly, component of the Golgi to ER traffic (GET) complex, which is composed of GET1, GET2 and GET3. Within the complex, GET1 and GET2 form a heterotetramer which is stabilized by phosphatidylinositol binding and which binds to the GET3 homodimer.

It localises to the endoplasmic reticulum membrane. Its subcellular location is the golgi apparatus membrane. Its function is as follows. Required for the post-translational delivery of tail-anchored (TA) proteins to the endoplasmic reticulum. Together with GET2, acts as a membrane receptor for soluble GET3, which recognizes and selectively binds the transmembrane domain of TA proteins in the cytosol. The GET complex cooperates with the HDEL receptor ERD2 to mediate the ATP-dependent retrieval of resident ER proteins that contain a C-terminal H-D-E-L retention signal from the Golgi to the ER. This Eremothecium gossypii (strain ATCC 10895 / CBS 109.51 / FGSC 9923 / NRRL Y-1056) (Yeast) protein is Golgi to ER traffic protein 1.